Reading from the N-terminus, the 357-residue chain is Guanine nucleotide-binding protein alpha-16 subunit (357 aa).

A lipid anchor (N-myristoyl glycine) is attached at Gly-2. Residue Cys-3 is the site of S-palmitoyl cysteine attachment. One can recognise a G-alpha domain in the interval 32 to 357 (RTIKLLLLGA…RDNLRTCGLY (326 aa)). Positions 35-48 (KLLLLGAGESGKST) are G1 motif. GTP-binding positions include 40-47 (GAGESGKS), 175-181 (LRTRIKT), 200-204 (DVGGQ), 269-272 (NKKD), and Ala-329. Positions 47 and 181 each coordinate Mg(2+). Residues 173–181 (DILRTRIKT) form a G2 motif region. The interval 196–205 (FLVFDVGGQR) is G3 motif. Residues 265–272 (ILFLNKKD) form a G4 motif region. Positions 327 to 332 (TCATDT) are G5 motif.

This sequence belongs to the G-alpha family. G proteins are composed of 3 units; alpha, beta and gamma. The alpha chain contains the guanine nucleotide binding site.

Its function is as follows. Guanine nucleotide-binding proteins (G proteins) are involved as modulators or transducers in various transmembrane signaling systems. In the 1-cell embryo, probably together with goa-1, controls nuclear rotation and spindle elongation during mitosis. During the first embryonic cell divisons, plays a role in gpr-1/2 cortical localization and in the proper orientation of EMS blastomere mitotic spindle. This is Guanine nucleotide-binding protein alpha-16 subunit (gpa-16) from Caenorhabditis elegans.